Reading from the N-terminus, the 265-residue chain is Energy-coupling factor transporter transmembrane protein EcfT (265 aa).

The next 6 membrane-spanning stretches (helical) occupy residues 29-49, 63-83, 94-114, 117-137, 143-163, and 243-263; these read VMAFIAIVFLANNWLTYALMF, FLFFIKGLQPIFWLILITLLL, LVDLGLLQITTLGLANGAMMF, FVLIIFMTTLLTLTTSPIELT, ILAPFRLVHLPVHELALMLSI, and RFADTCLLISLAVLSGLLFWL.

Belongs to the energy-coupling factor EcfT family. As to quaternary structure, forms a stable energy-coupling factor (ECF) transporter complex composed of 2 membrane-embedded substrate-binding proteins (S component), 2 ATP-binding proteins (A component) and 2 transmembrane proteins (T component). May be able to interact with more than 1 S component at a time.

The protein resides in the cell membrane. Its function is as follows. Transmembrane (T) component of an energy-coupling factor (ECF) ABC-transporter complex. Unlike classic ABC transporters this ECF transporter provides the energy necessary to transport a number of different substrates. In Listeria innocua serovar 6a (strain ATCC BAA-680 / CLIP 11262), this protein is Energy-coupling factor transporter transmembrane protein EcfT.